The sequence spans 353 residues: Photosystem II protein D1 (353 aa).

An N-acetylthreonine modification is found at Thr2. Thr2 bears the Phosphothreonine mark. The next 3 helical transmembrane spans lie at 29–46, 118–133, and 142–156; these read YIGWFGVLMIPTLLTATS, HFLLGVACYMGREWEL, and WIAVAYSAPVAAATA. His118 serves as a coordination point for chlorophyll a. Tyr126 is a pheophytin a binding site. [CaMn4O5] cluster contacts are provided by Asp170 and Glu189. A helical transmembrane segment spans residues 197–218; the sequence is FHMLGVAGVFGGSLFSAMHGSL. His198 is a chlorophyll a binding site. A quinone-binding positions include His215 and 264-265; that span reads SF. Position 215 (His215) interacts with Fe cation. A Fe cation-binding site is contributed by His272. Residues 274 to 288 traverse the membrane as a helical segment; sequence FLAAWPVVGIWFTAL. [CaMn4O5] cluster contacts are provided by His332, Glu333, Asp342, and Ala344. The propeptide occupies 345-353; sequence AVEAPSING.

Belongs to the reaction center PufL/M/PsbA/D family. In terms of assembly, PSII is composed of 1 copy each of membrane proteins PsbA, PsbB, PsbC, PsbD, PsbE, PsbF, PsbH, PsbI, PsbJ, PsbK, PsbL, PsbM, PsbT, PsbX, PsbY, PsbZ, Psb30/Ycf12, at least 3 peripheral proteins of the oxygen-evolving complex and a large number of cofactors. It forms dimeric complexes. It depends on The D1/D2 heterodimer binds P680, chlorophylls that are the primary electron donor of PSII, and subsequent electron acceptors. It shares a non-heme iron and each subunit binds pheophytin, quinone, additional chlorophylls, carotenoids and lipids. D1 provides most of the ligands for the Mn4-Ca-O5 cluster of the oxygen-evolving complex (OEC). There is also a Cl(-1) ion associated with D1 and D2, which is required for oxygen evolution. The PSII complex binds additional chlorophylls, carotenoids and specific lipids. as a cofactor. In terms of processing, tyr-161 forms a radical intermediate that is referred to as redox-active TyrZ, YZ or Y-Z. C-terminally processed by CTPA; processing is essential to allow assembly of the oxygen-evolving complex and thus photosynthetic growth.

It is found in the plastid. The protein resides in the chloroplast thylakoid membrane. The enzyme catalyses 2 a plastoquinone + 4 hnu + 2 H2O = 2 a plastoquinol + O2. Its function is as follows. Photosystem II (PSII) is a light-driven water:plastoquinone oxidoreductase that uses light energy to abstract electrons from H(2)O, generating O(2) and a proton gradient subsequently used for ATP formation. It consists of a core antenna complex that captures photons, and an electron transfer chain that converts photonic excitation into a charge separation. The D1/D2 (PsbA/PsbD) reaction center heterodimer binds P680, the primary electron donor of PSII as well as several subsequent electron acceptors. This chain is Photosystem II protein D1, found in Illicium oligandrum (Star anise).